Reading from the N-terminus, the 84-residue chain is ATP synthase subunit c (84 aa).

Transmembrane regions (helical) follow at residues I10–L30 and F53–F73.

This sequence belongs to the ATPase C chain family. As to quaternary structure, F-type ATPases have 2 components, F(1) - the catalytic core - and F(0) - the membrane proton channel. F(1) has five subunits: alpha(3), beta(3), gamma(1), delta(1), epsilon(1). F(0) has three main subunits: a(1), b(2) and c(10-14). The alpha and beta chains form an alternating ring which encloses part of the gamma chain. F(1) is attached to F(0) by a central stalk formed by the gamma and epsilon chains, while a peripheral stalk is formed by the delta and b chains.

The protein localises to the cell inner membrane. Its function is as follows. F(1)F(0) ATP synthase produces ATP from ADP in the presence of a proton or sodium gradient. F-type ATPases consist of two structural domains, F(1) containing the extramembraneous catalytic core and F(0) containing the membrane proton channel, linked together by a central stalk and a peripheral stalk. During catalysis, ATP synthesis in the catalytic domain of F(1) is coupled via a rotary mechanism of the central stalk subunits to proton translocation. Functionally, key component of the F(0) channel; it plays a direct role in translocation across the membrane. A homomeric c-ring of between 10-14 subunits forms the central stalk rotor element with the F(1) delta and epsilon subunits. The sequence is that of ATP synthase subunit c from Vibrio alginolyticus.